Reading from the N-terminus, the 238-residue chain is Fatty acid metabolism regulator protein (238 aa).

An HTH gntR-type domain is found at 6 to 74 (KGPASFAEKY…HGKPTRVNNF (69 aa)). The H-T-H motif DNA-binding region spans 34-53 (ERELSELIGVTRTTLREVLQ).

In terms of assembly, homodimer.

The protein localises to the cytoplasm. In terms of biological role, multifunctional regulator of fatty acid metabolism. This chain is Fatty acid metabolism regulator protein, found in Shewanella baltica (strain OS155 / ATCC BAA-1091).